The sequence spans 396 residues: MAKEKFDRSKSHANIGTIGHVDHGKTTLTAAISTVLHKKSGKGTAMAYDQIDGAPEERERGITISTAHVEYETDTRHYAHVDCPGHADYVKNMITGAAQMDGAILVVSAADGPMPQTREHILLSKNVGVPYIVVFLNKCDMVDDEELLELVEMEVRDLLSEYDFPGDDVPVVKGSALKALEGDAEYEEKILELMAAVDEYIPTPERDTDKPFMMPVEDVFSITGRGTVATGRVERGQVKVGDEVEIIGLQEENSKTTVTGVEMFRKLLDYAEAGDNIGALLRGVAREDIQRGQVLAKPGTITPHSKFKAEVYVLSKEEGGRHTPFFSNYRPQFYFRTTDVTGIINLPEGVEMVMPGDNTEMIVELISTIAIEEGTRFSIREGGRTVGSGVVSTITE.

The tr-type G domain occupies 10 to 205 (KSHANIGTIG…AVDEYIPTPE (196 aa)). Positions 19–26 (GHVDHGKT) are G1. 19-26 (GHVDHGKT) is a binding site for GTP. Residue Thr26 participates in Mg(2+) binding. The tract at residues 61 to 65 (GITIS) is G2. The G3 stretch occupies residues 82–85 (DCPG). Residues 82 to 86 (DCPGH) and 137 to 140 (NKCD) each bind GTP. The G4 stretch occupies residues 137–140 (NKCD). A G5 region spans residues 175–177 (SAL).

Belongs to the TRAFAC class translation factor GTPase superfamily. Classic translation factor GTPase family. EF-Tu/EF-1A subfamily. In terms of assembly, monomer.

The protein resides in the cytoplasm. It carries out the reaction GTP + H2O = GDP + phosphate + H(+). Functionally, GTP hydrolase that promotes the GTP-dependent binding of aminoacyl-tRNA to the A-site of ribosomes during protein biosynthesis. The sequence is that of Elongation factor Tu from Bacillus velezensis (strain DSM 23117 / BGSC 10A6 / LMG 26770 / FZB42) (Bacillus amyloliquefaciens subsp. plantarum).